The sequence spans 79 residues: Putative defensin-like protein 137 (79 aa).

The N-terminal stretch at 1–24 (MKKYFQPSFVILIIFTVLVLGVVG) is a signal peptide. Disulfide bonds link C33/C78, C42/C62, C47/C72, and C51/C74.

This sequence belongs to the DEFL family.

It is found in the secreted. The chain is Putative defensin-like protein 137 (LCR14) from Arabidopsis thaliana (Mouse-ear cress).